The chain runs to 196 residues: Charged multivesicular body protein 1a (196 aa).

The residue at position 1 (methionine 1) is an N-acetylmethionine. Residues 5–47 (LFQLKFTAKQLEKLAKKAEKDSKAEQAKVKKALLQKNVECARV) are a coiled coil. Position 101 is a phosphoserine (serine 101). Residues 102–124 (TMDLQKVSSVMDRFEQQVQNLDV) are a coiled coil. Position 173 is a phosphoserine (serine 173). Residues 173 to 196 (SAVGESSVRSQEDQLSRRLAALRN) form a disordered region. The MIT-interacting motif motif lies at 185–195 (DQLSRRLAALR).

It belongs to the SNF7 family. Probable peripherally associated component of the endosomal sorting required for transport complex III (ESCRT-III). ESCRT-III components are thought to multimerize to form a flat lattice on the perimeter membrane of the endosome. Several assembly forms of ESCRT-III may exist that interact and act sequentially. Self-associates. Interacts with CHMP1B. Interacts with VPS4A. Interacts with VPS4B. Interacts with PHF1. Interacts with IST1. Interacts with MITD1. Expressed in placenta, cultured skin fibroblasts and in osteoblast cell line MG-63.

It is found in the cytoplasm. The protein localises to the endosome membrane. Its subcellular location is the nucleus matrix. In terms of biological role, probable peripherally associated component of the endosomal sorting required for transport complex III (ESCRT-III) which is involved in multivesicular bodies (MVBs) formation and sorting of endosomal cargo proteins into MVBs. MVBs contain intraluminal vesicles (ILVs) that are generated by invagination and scission from the limiting membrane of the endosome and mostly are delivered to lysosomes enabling degradation of membrane proteins, such as stimulated growth factor receptors, lysosomal enzymes and lipids. The MVB pathway appears to require the sequential function of ESCRT-O, -I,-II and -III complexes. ESCRT-III proteins mostly dissociate from the invaginating membrane before the ILV is released. The ESCRT machinery also functions in topologically equivalent membrane fission events, such as the terminal stages of cytokinesis and the budding of enveloped viruses (HIV-1 and other lentiviruses). ESCRT-III proteins are believed to mediate the necessary vesicle extrusion and/or membrane fission activities, possibly in conjunction with the AAA ATPase VPS4. Involved in cytokinesis. Involved in recruiting VPS4A and/or VPS4B to the midbody of dividing cells. May also be involved in chromosome condensation. Targets the Polycomb group (PcG) protein BMI1/PCGF4 to regions of condensed chromatin. May play a role in stable cell cycle progression and in PcG gene silencing. The polypeptide is Charged multivesicular body protein 1a (CHMP1A) (Homo sapiens (Human)).